We begin with the raw amino-acid sequence, 202 residues long: MEAEAGGLEELTDEEMAALGKEELVRRLRREEAARLAALVQRGRLMQEVNRQLQGHLGEIRELKQLNRRLQAENRELRDLCCFLDSERQRGRRAARQWQLFGTQASRAVREDLGGCWQKLAELEGRQEELLRENLALKELCLALGEEWGPRGGPGGAVGSGAGPTPELALPPCGPRDLGDGSSSTGSVGSPDQLPLACSPDD.

N-acetylmethionine is present on M1. 2 coiled-coil regions span residues R44–C82 and Q118–C141. The segment covering G152–A162 has biased composition (gly residues). Residues G152–D202 form a disordered region. Low complexity predominate over residues D180–S190.

It belongs to the CCDC85 family. As to quaternary structure, interacts with CEBPB. May interact with CEBPD. Interacts with EURL. Interacts with MCRS1. Interacts with TCF7L2; competes with CTNNB1. Interacts with ANKRD26. Interacts with the beta-catenin family proteins ARVCF, CTNND1, CTNND2 and PKP4. Expressed in white and brown adipose tissue.

The protein resides in the nucleus. Its subcellular location is the cytoplasm. The protein localises to the cytoskeleton. It localises to the microtubule organizing center. It is found in the centrosome. The protein resides in the cell junction. Its subcellular location is the adherens junction. In terms of biological role, functions as a transcriptional repressor. May inhibit the activity of CTNNB1 in a TP53-dependent manner and thus regulate cell growth. May function in adipocyte differentiation, negatively regulating mitotic clonal expansion. Plays a role in cell-cell adhesion and epithelium development through its interaction with proteins of the beta-catenin family. This chain is Coiled-coil domain-containing protein 85B (Ccdc85b), found in Mus musculus (Mouse).